We begin with the raw amino-acid sequence, 512 residues long: Secreted triacylglycerol lipase LIP5 (512 aa).

The signal sequence occupies residues 1–17 (MMYASLVHWLALAVALA). A disulfide bridge links Cys118 with Cys292. The active-site Nucleophile is the Ser203. Residue Asn316 is glycosylated (N-linked (GlcNAc...) asparagine). Asp352 is a catalytic residue. A glycan (N-linked (GlcNAc...) asparagine) is linked at Asn361. His386 is a catalytic residue. Asn453 carries N-linked (GlcNAc...) asparagine glycosylation. Residues 480 to 512 (KGDISPGEGGDHTKESKKAAAKFKAEKKHGKHH) are disordered. Basic and acidic residues predominate over residues 488-497 (GGDHTKESKK). Positions 498 to 512 (AAAKFKAEKKHGKHH) are enriched in basic residues.

The protein belongs to the AB hydrolase superfamily. Lipase family. Class Lip subfamily.

It localises to the secreted. It carries out the reaction a triacylglycerol + H2O = a diacylglycerol + a fatty acid + H(+). It catalyses the reaction a monoacylglycerol + H2O = glycerol + a fatty acid + H(+). The enzyme catalyses a diacylglycerol + H2O = a monoacylglycerol + a fatty acid + H(+). In terms of biological role, secreted lipase that hydrolyzes acylglycerol lipids such as triacylglycerols and consequently releases free fatty acid. Can hydrolyze 4-nitrophenyl palmitate to release 4-nitrophenol and palmitoic acid. Due to an absence of fatty acid synthase genes in Malassezia species, secretory lipases are essential for the yeast to generate free fatty acids from degradation of sebum and assimilate them as lipid sources for growth. Plays an essential role at the pathogen-host interface during disease progression. The polypeptide is Secreted triacylglycerol lipase LIP5 (Malassezia restricta (strain ATCC 96810 / NBRC 103918 / CBS 7877) (Seborrheic dermatitis infection agent)).